Here is a 115-residue protein sequence, read N- to C-terminus: Large ribosomal subunit protein bL19 (115 aa).

Belongs to the bacterial ribosomal protein bL19 family.

In terms of biological role, this protein is located at the 30S-50S ribosomal subunit interface and may play a role in the structure and function of the aminoacyl-tRNA binding site. The chain is Large ribosomal subunit protein bL19 from Streptococcus equi subsp. zooepidemicus (strain H70).